The sequence spans 131 residues: Small ribosomal subunit protein uS8 (131 aa).

The protein belongs to the universal ribosomal protein uS8 family. In terms of assembly, part of the 30S ribosomal subunit. Contacts proteins S5 and S12.

Its function is as follows. One of the primary rRNA binding proteins, it binds directly to 16S rRNA central domain where it helps coordinate assembly of the platform of the 30S subunit. The polypeptide is Small ribosomal subunit protein uS8 (Legionella pneumophila subsp. pneumophila (strain Philadelphia 1 / ATCC 33152 / DSM 7513)).